The chain runs to 114 residues: Hydrogenase maturation factor HypA (114 aa).

H2 is a Ni(2+) binding site. 4 residues coordinate Zn(2+): C73, C76, C89, and C92.

This sequence belongs to the HypA/HybF family.

In terms of biological role, involved in the maturation of [NiFe] hydrogenases. Required for nickel insertion into the metal center of the hydrogenase. The chain is Hydrogenase maturation factor HypA from Caldanaerobacter subterraneus subsp. tengcongensis (strain DSM 15242 / JCM 11007 / NBRC 100824 / MB4) (Thermoanaerobacter tengcongensis).